A 429-amino-acid chain; its full sequence is Adenylosuccinate synthetase (429 aa).

GTP is bound by residues 12–18 (GDEGKGK) and 40–42 (GHT). Residue D13 is the Proton acceptor of the active site. Positions 13 and 40 each coordinate Mg(2+). Residues 13–16 (DEGK), 38–41 (NAGH), T128, R142, Q223, T238, and R302 contribute to the IMP site. H41 acts as the Proton donor in catalysis. Position 298–304 (298–304 (VNTGRKR)) interacts with substrate. GTP contacts are provided by residues R304, 330–332 (KLD), and 412–414 (GVG).

The protein belongs to the adenylosuccinate synthetase family. Homodimer. Mg(2+) is required as a cofactor.

It is found in the cytoplasm. It carries out the reaction IMP + L-aspartate + GTP = N(6)-(1,2-dicarboxyethyl)-AMP + GDP + phosphate + 2 H(+). The protein operates within purine metabolism; AMP biosynthesis via de novo pathway; AMP from IMP: step 1/2. Its function is as follows. Plays an important role in the de novo pathway of purine nucleotide biosynthesis. Catalyzes the first committed step in the biosynthesis of AMP from IMP. In Corynebacterium glutamicum (strain R), this protein is Adenylosuccinate synthetase.